The following is a 665-amino-acid chain: Methionine--tRNA ligase (665 aa).

Residues 16–26 carry the 'HIGH' region motif; sequence YYPSGKAHIGH. Positions 311–315 match the 'KMSKS' region motif; the sequence is KMSKS. K314 is an ATP binding site. Residues 564 to 665 form the tRNA-binding domain; the sequence is DFDKIDLRVA…SALPNGAKVK (102 aa).

It belongs to the class-I aminoacyl-tRNA synthetase family. MetG type 2B subfamily. As to quaternary structure, homodimer.

The protein localises to the cytoplasm. It carries out the reaction tRNA(Met) + L-methionine + ATP = L-methionyl-tRNA(Met) + AMP + diphosphate. Is required not only for elongation of protein synthesis but also for the initiation of all mRNA translation through initiator tRNA(fMet) aminoacylation. The polypeptide is Methionine--tRNA ligase (Listeria monocytogenes serotype 4b (strain F2365)).